A 177-amino-acid polypeptide reads, in one-letter code: Parathyroid hormone-related protein (177 aa).

The signal sequence occupies residues 1–24; that stretch reads MLWRLVQQWSVAVFLLSYSVPSCG. Residues 25–34 constitute a propeptide that is removed on maturation; the sequence is RSVEELGRRL. Residues 57 to 68 form an important for receptor binding region; that stretch reads RFFLHHLIAEIH. The tract at residues 74–149 is disordered; the sequence is ATSEVSPNSK…KRRTRSAWLT (76 aa). Polar residues predominate over residues 76-90; the sequence is SEVSPNSKPAPNTKN. The short motif at 108–129 is the Nuclear localization signal element; sequence TNKVETYKEQPLKTPGKKKKSK. Basic and acidic residues predominate over residues 109 to 118; the sequence is NKVETYKEQP. Positions 122-132 are enriched in basic residues; sequence PGKKKKSKPGK.

The protein belongs to the parathyroid hormone family. As to quaternary structure, PTHrP interacts with PTH1R (via N-terminal extracellular domain). Post-translationally, there are several secretory forms, including osteostatin, arising from endoproteolytic cleavage of the initial translation product. Each of these secretory forms is believed to have one or more of its own receptors that mediates the normal paracrine, autocrine and endocrine actions.

The protein localises to the secreted. It localises to the cytoplasm. It is found in the nucleus. Neuroendocrine peptide which is a critical regulator of cellular and organ growth, development, migration, differentiation and survival and of epithelial calcium ion transport. Acts by binding to its receptor, PTH1R, activating G protein-coupled receptor signaling. Regulates endochondral bone development and epithelial-mesenchymal interactions during the formation of the mammary glands and teeth. Required for skeletal homeostasis. Promotes mammary mesenchyme differentiation and bud outgrowth by modulating mesenchymal cell responsiveness to BMPs. Up-regulates BMPR1A expression in the mammary mesenchyme and this increases the sensitivity of these cells to BMPs and allows them to respond to BMP4 in a paracrine and/or autocrine fashion. BMP4 signaling in the mesenchyme, in turn, triggers epithelial outgrowth and augments MSX2 expression, which causes the mammary mesenchyme to inhibit hair follicle formation within the nipple sheath. Functionally, potent inhibitor of osteoclastic bone resorption. In Bos taurus (Bovine), this protein is Parathyroid hormone-related protein (PTHLH).